The primary structure comprises 512 residues: MSFTTLYSAIQGDASARALVAPSLNAELSFSELRIAIMDLQRQIASLGIKVGDPVNIAIPNGLEFVVAFYAVSWQRAICGPLNSNYKQSEFEFYIDDLKSKLVIVPEGSVAANTPAVRAAKKLSVAVAELAWCPKSRLVRIVHFEGAKINAPQPLGLPQPDDVMLVLHTSGTTGRPKVVPLTHKNLCRSIHNITTSYRLDPRDTSYVVMPLFHVHGLLCGLLSTLASGGCAVVPPKFSAHSFWKEFIQYGATWYTAVPTIHQILLRTPPPKPLPRIRFIRSCSSPLAPPVLSKLEATFRAPVLEAYAMTEASHQMTTNPLPPLVHKPHSVGKPFGVELKILDQKGNEMPQGKEGEICVRGINVTKGYLNNPAANKSSFTKDRFFRTGDEGKLDKDGYVFITGRIKELVNRGGEKISPAEIDAVLMQHPDVSEAVCFAVPDEKYGQDIQAAINPVAGKTVTPKQLHDYLEQKVAAFKIPKKFYFTDRIPKTATGKVQRRLVCDAFFNHSKAKL.

168-179 (HTSGTTGRPKVV) is an ATP binding site. Serine 283 and serine 284 each carry phosphoserine. Residues 381–429 (DRFFRTGDEGKLDKDGYVFITGRIKELVNRGGEKISPAEIDAVLMQHPD) carry the FACS motif. Positions 510-512 (AKL) match the Microbody targeting signal motif.

It belongs to the ATP-dependent AMP-binding enzyme family.

The protein resides in the peroxisome matrix. It is found in the peroxisome membrane. The catalysed reaction is oxalate + ATP + CoA = oxalyl-CoA + AMP + diphosphate. Functionally, catalyzes the first step in a degradation pathway of oxalate to CO(2) to protect the cell against the harmful effects of oxalate derived from endogenous processes or an environmental sources. The sequence is that of Oxalate--CoA ligase (pcs60) from Schizosaccharomyces pombe (strain 972 / ATCC 24843) (Fission yeast).